The following is a 334-amino-acid chain: N-acetyl-gamma-glutamyl-phosphate reductase (334 aa).

C154 is an active-site residue.

This sequence belongs to the NAGSA dehydrogenase family. Type 1 subfamily.

Its subcellular location is the cytoplasm. The catalysed reaction is N-acetyl-L-glutamate 5-semialdehyde + phosphate + NADP(+) = N-acetyl-L-glutamyl 5-phosphate + NADPH + H(+). Its pathway is amino-acid biosynthesis; L-arginine biosynthesis; N(2)-acetyl-L-ornithine from L-glutamate: step 3/4. Functionally, catalyzes the NADPH-dependent reduction of N-acetyl-5-glutamyl phosphate to yield N-acetyl-L-glutamate 5-semialdehyde. The protein is N-acetyl-gamma-glutamyl-phosphate reductase of Photorhabdus laumondii subsp. laumondii (strain DSM 15139 / CIP 105565 / TT01) (Photorhabdus luminescens subsp. laumondii).